Reading from the N-terminus, the 291-residue chain is Shikimate dehydrogenase (NADP(+)) (291 aa).

Residues 14-16 and Thr61 each bind shikimate; that span reads SKS. Lys65 serves as the catalytic Proton acceptor. Position 77 (Glu77) interacts with NADP(+). Asn86 and Asp102 together coordinate shikimate. NADP(+) is bound by residues 139–143, 164–169, and Leu232; these read GAGGA and NRTFSR. Tyr234 serves as a coordination point for shikimate. Residue Gly256 participates in NADP(+) binding.

Belongs to the shikimate dehydrogenase family. Homodimer.

The enzyme catalyses shikimate + NADP(+) = 3-dehydroshikimate + NADPH + H(+). The protein operates within metabolic intermediate biosynthesis; chorismate biosynthesis; chorismate from D-erythrose 4-phosphate and phosphoenolpyruvate: step 4/7. Involved in the biosynthesis of the chorismate, which leads to the biosynthesis of aromatic amino acids. Catalyzes the reversible NADPH linked reduction of 3-dehydroshikimate (DHSA) to yield shikimate (SA). This is Shikimate dehydrogenase (NADP(+)) from Blochmanniella pennsylvanica (strain BPEN).